The sequence spans 71 residues: MPSVKVRENEPFEFALRRFKRICEKAGILAETRKREFYEKPTQERKRKAAAAVKRNIRRTSRDVTKRKRLY.

The tract at residues 40–71 (KPTQERKRKAAAAVKRNIRRTSRDVTKRKRLY) is disordered. The segment covering 45–71 (RKRKAAAAVKRNIRRTSRDVTKRKRLY) has biased composition (basic residues).

Belongs to the bacterial ribosomal protein bS21 family.

This Xylella fastidiosa (strain M23) protein is Small ribosomal subunit protein bS21.